The chain runs to 151 residues: Nucleoside diphosphate kinase (151 aa).

The ATP site is built by Lys11, Phe59, Arg87, Thr93, Arg104, and Asn114. Residue His117 is the Pros-phosphohistidine intermediate of the active site.

Belongs to the NDK family. As to quaternary structure, homotetramer. Requires Mg(2+) as cofactor.

The protein resides in the cytoplasm. It carries out the reaction a 2'-deoxyribonucleoside 5'-diphosphate + ATP = a 2'-deoxyribonucleoside 5'-triphosphate + ADP. The enzyme catalyses a ribonucleoside 5'-diphosphate + ATP = a ribonucleoside 5'-triphosphate + ADP. In terms of biological role, major role in the synthesis of nucleoside triphosphates other than ATP. The ATP gamma phosphate is transferred to the NDP beta phosphate via a ping-pong mechanism, using a phosphorylated active-site intermediate. The sequence is that of Nucleoside diphosphate kinase from Prochlorococcus marinus (strain NATL1A).